The primary structure comprises 149 residues: Transcriptional repressor NrdR (149 aa).

The segment at 3–34 is a zinc-finger region; sequence CPFCFAVDTKVIDSRLVGEGSSVRRRRQCLVC. The ATP-cone domain maps to 49-139; that stretch reads PRVIKSNDVR…VYRSFEDIKD (91 aa).

Belongs to the NrdR family. It depends on Zn(2+) as a cofactor.

In terms of biological role, negatively regulates transcription of bacterial ribonucleotide reductase nrd genes and operons by binding to NrdR-boxes. The protein is Transcriptional repressor NrdR of Salmonella schwarzengrund (strain CVM19633).